We begin with the raw amino-acid sequence, 337 residues long: Ketol-acid reductoisomerase (NADP(+)) (337 aa).

The KARI N-terminal Rossmann domain occupies Ile-3 to Thr-183. Residues Tyr-26–Gln-29, Arg-49, Ser-52, Ser-54, and Asp-84–Gln-87 contribute to the NADP(+) site. The active site involves His-109. Residue Gly-135 coordinates NADP(+). The KARI C-terminal knotted domain maps to Thr-184–Val-329. Residues Asp-192, Glu-196, Glu-228, and Glu-232 each coordinate Mg(2+). Ser-253 serves as a coordination point for substrate.

The protein belongs to the ketol-acid reductoisomerase family. Requires Mg(2+) as cofactor.

It carries out the reaction (2R)-2,3-dihydroxy-3-methylbutanoate + NADP(+) = (2S)-2-acetolactate + NADPH + H(+). The catalysed reaction is (2R,3R)-2,3-dihydroxy-3-methylpentanoate + NADP(+) = (S)-2-ethyl-2-hydroxy-3-oxobutanoate + NADPH + H(+). It functions in the pathway amino-acid biosynthesis; L-isoleucine biosynthesis; L-isoleucine from 2-oxobutanoate: step 2/4. The protein operates within amino-acid biosynthesis; L-valine biosynthesis; L-valine from pyruvate: step 2/4. In terms of biological role, involved in the biosynthesis of branched-chain amino acids (BCAA). Catalyzes an alkyl-migration followed by a ketol-acid reduction of (S)-2-acetolactate (S2AL) to yield (R)-2,3-dihydroxy-isovalerate. In the isomerase reaction, S2AL is rearranged via a Mg-dependent methyl migration to produce 3-hydroxy-3-methyl-2-ketobutyrate (HMKB). In the reductase reaction, this 2-ketoacid undergoes a metal-dependent reduction by NADPH to yield (R)-2,3-dihydroxy-isovalerate. The protein is Ketol-acid reductoisomerase (NADP(+)) of Corynebacterium efficiens (strain DSM 44549 / YS-314 / AJ 12310 / JCM 11189 / NBRC 100395).